The sequence spans 414 residues: 2,3-bisphosphoglycerate-independent phosphoglycerate mutase (414 aa).

It belongs to the BPG-independent phosphoglycerate mutase family. A-PGAM subfamily.

The enzyme catalyses (2R)-2-phosphoglycerate = (2R)-3-phosphoglycerate. The protein operates within carbohydrate degradation; glycolysis; pyruvate from D-glyceraldehyde 3-phosphate: step 3/5. Its function is as follows. Catalyzes the interconversion of 2-phosphoglycerate and 3-phosphoglycerate. The chain is 2,3-bisphosphoglycerate-independent phosphoglycerate mutase from Saccharolobus islandicus (strain M.14.25 / Kamchatka #1) (Sulfolobus islandicus).